The following is a 360-amino-acid chain: MSKQILILPGDGIGPEIMTEAVKVLELANEKYQLGFELTHDVIGGAAIDKHGVPLADETLERARAADAVLLGAVGGPKWDTIERDIRPERGLLKIRSQLGLFGNLRPAILYPQLADASSLKPEIVAGLDIMIVRELTGGIYFGAPRGTRVLDNGERQAYDTLPYSESEIRRIAKVGFDMAMVRGKKLCSVDKANVLASSQLWREIVEQVARDYPEVELSHMYVDNAAMQLVRAPKQFDVIVTDNLFGDILSDQASMLTGSIGMLPSASLDTANKGMYEPCHGSAPDIAGKGIANPLATILSVSMMLRYSFNLTDAADAIEKAVSLVLDQGIRTGDIWSEGKVKVGTQEMGDAVVAALRNL.

Gly-76 to Glu-89 contacts NAD(+). Positions 96, 106, 134, and 224 each coordinate substrate. Mg(2+) is bound by residues Asp-224, Asp-248, and Asp-252. Gly-282–Asn-294 is a binding site for NAD(+).

Belongs to the isocitrate and isopropylmalate dehydrogenases family. LeuB type 1 subfamily. In terms of assembly, homodimer. Requires Mg(2+) as cofactor. Mn(2+) is required as a cofactor.

It localises to the cytoplasm. The enzyme catalyses (2R,3S)-3-isopropylmalate + NAD(+) = 4-methyl-2-oxopentanoate + CO2 + NADH. It participates in amino-acid biosynthesis; L-leucine biosynthesis; L-leucine from 3-methyl-2-oxobutanoate: step 3/4. Catalyzes the oxidation of 3-carboxy-2-hydroxy-4-methylpentanoate (3-isopropylmalate) to 3-carboxy-4-methyl-2-oxopentanoate. The product decarboxylates to 4-methyl-2 oxopentanoate. This Pseudomonas syringae pv. syringae (strain B728a) protein is 3-isopropylmalate dehydrogenase.